Here is a 676-residue protein sequence, read N- to C-terminus: MTPGIRAPFLLTLLLALVTDPNSVALSQDTSSSSTLNTTPVHSGSSAPATSSAVDSATTPGHSGSSAPPTSSAVNSATTPGHSGSSAPPTSSAVNSATTPVHSGSSAPVTSSAVNSATTPVHSGSSAPPTSSAVNSATTPVHSGSSAPVTSSAVNSATTPVHSGSSAPVTSSAVDSATTPVHSGSSAPPTSSAVNSATTPVHSGSSAPVTSSAVNSATTPVHSGSSAPVTSSAVNSATTPVHSGSSAPPTSSVVNSATTPVHSGSSAPPTSSAVNLATTPVHSGSSTPATNSTTDSATTPVPPGSSMQTTEAISGSANTPIHNGSLVPTTSSALVPTTSAAHSGASAMTNSSESDLATTPIDSGTSISTTKAPATTPVHNGSLVPTTSSVLGSATTLIHNDTSTMATTTPVGNGTQSSVPSRHPVTPTPPAVSSNSTIALSTYYSTALSPAFSSHAAPQVSVGVSFFLLSFHIWNHQFNSSLEDPSSNYYQELKRNVSGLFLQVFSRAFLGISTIEFRSGSVVVDSTVIFREGAVNASEVKSQLLQHEQEAEEYNLAISKINVGEMQFPSSAQSWPGVPGWGIALLVLVCILVALAIVYLIALAVCQCRRKNYGQLDIFPIQDSYHPMSEYPTYHTHGRYVPPGSTKRSPYEEVSAGNGSSLSYTNPVVATTSANL.

Positions 1-25 are cleaved as a signal peptide; that stretch reads MTPGIRAPFLLTLLLALVTDPNSVA. The tract at residues 25-387 is disordered; that stretch reads ALSQDTSSSS…VHNGSLVPTT (363 aa). Residues 26 to 582 lie on the Extracellular side of the membrane; it reads LSQDTSSSST…QSWPGVPGWG (557 aa). A run of 13 repeats spans residues 40–59, 60–79, 80–99, 100–119, 120–139, 140–159, 160–179, 180–199, 200–219, 220–239, 240–259, 260–279, and 280–299. The segment at 40–314 is 13 X approximate tandem repeats of P-V-H-S-G-S-S-A-P-P-T-S-S-A-V-N-S-A-T-T; the sequence is PVHSGSSAPA…SSMQTTEAIS (275 aa). Residues S43, S45, and S46 are each glycosylated (O-linked (GalNAc...) serine). O-linked (GalNAc...) threonine glycosylation is present at T50. O-linked (GalNAc...) serine glycans are attached at residues S51, S52, and S56. T58 and T59 each carry an O-linked (GalNAc...) threonine glycan. N291, N323, N350, N380, N400, N413, N435, N479, N496, and N536 each carry an N-linked (GlcNAc...) asparagine glycan. A compositionally biased stretch (polar residues) spans 404–420; the sequence is TMATTTPVGNGTQSSVP. Residues 404 to 434 are disordered; the sequence is TMATTTPVGNGTQSSVPSRHPVTPTPPAVSS. An SEA domain is found at 463–570; the sequence is GVSFFLLSFH…INVGEMQFPS (108 aa). The helical transmembrane segment at 583 to 603 threads the bilayer; sequence IALLVLVCILVALAIVYLIAL. At 604 to 676 the chain is on the cytoplasmic side; sequence AVCQCRRKNY…PVVATTSANL (73 aa). 2 S-palmitoyl cysteine lipidation sites follow: C606 and C608. The segment at 614–650 is interaction with P53; the sequence is GQLDIFPIQDSYHPMSEYPTYHTHGRYVPPGSTKRSP. A Phosphotyrosine; by PDGFR modification is found at Y625. Residues 625–628 carry the Interaction with GRB2 motif; it reads YHPM. Position 634 is a phosphotyrosine (Y634). The disordered stretch occupies residues 636 to 659; it reads THGRYVPPGSTKRSPYEEVSAGNG. A Phosphotyrosine; by PDGFR modification is found at Y640. Residues 645–652 are required for interaction with GSK3B; that stretch reads STKRSPYE. A Phosphothreonine; by PKC/PRKCD modification is found at T646. S649 bears the Phosphoserine; by GSK3-beta mark. Y651 carries the phosphotyrosine; by CSK, EGFR and SRC modification. The Interaction with SRC and ESR1 motif lies at 651-654; the sequence is YEEV. The segment at 655 to 662 is required for interaction with beta- and gamma-catenins; the sequence is SAGNGSSL. Y664 carries the post-translational modification Phosphotyrosine. Positions 664–667 match the Required for interaction with AP1S2 motif; sequence YTNP.

As to quaternary structure, the alpha subunit forms a tight, non-covalent heterodimeric complex with the proteolytically-released beta-subunit. Binds directly the SH2 domain of GRB2, and forms a MUC1/GRB2/SOS1 complex involved in RAS signaling. The cytoplasmic tail (MUC1CT) interacts with several proteins such as SRC, CTNNB1 and ERBs. Interaction with the SH2 domain of CSK decreases interaction with GSK3B. Interacts with CTNNB1/beta-catenin and JUP/gamma-catenin and promotes cell adhesion. Interaction with JUP/gamma-catenin is induced by heregulin. Binds PRKCD, ERBB2, ERBB3 and ERBB4. Heregulin (HRG) stimulates the interaction with ERBB2 and, to a much lesser extent, the interaction with ERBB3 and ERBB4. Interacts with P53 in response to DNA damage. Interacts with KLF4. Interacts with estrogen receptor alpha/ESR1, through its DNA-binding domain, and stimulates its transcription activity. Binds ADAM17. Post-translationally, probably both N- and O-glycosylated (in repeat region). Proteolytic cleavage in the SEA domain occurs in the endoplasmic reticulum by an autoproteolytic mechanism and requires the full-length SEA domain as well as requiring a Ser, Thr or Cys residue at the P + 1 site. Ectodomain shedding is mediated by ADAM17 in uterine epithelial cells. In terms of processing, dual palmitoylation on cysteine residues in the CQC motif is required for recycling from endosomes back to the plasma membrane. Post-translationally, phosphorylated on tyrosines and serine residues in the C-terminal. Phosphorylation on tyrosines in the C-terminal increases the nuclear location of MUC1 and beta-catenin. Phosphorylation by PKC delta induces binding of MUC1 to beta-catenin/CTNNB1 and thus decreases the formation of the beta-catenin/E-cadherin complex. Src-mediated phosphorylation inhibits interaction with GSK3B. Csk- or Src- or EGFR-mediated phosphorylation on Tyr-651 increases binding to beta-catenin/CTNNB1. GSK3B-mediated phosphorylation on Ser-649 decreases this interaction but restores the formation of the beta-cadherin/E-cadherin complex. On T-cell receptor activation, phosphorylated by LCK. PDGFR-mediated phosphorylation increases nuclear colocalization of MUC1CT and CTNNB1.

Its subcellular location is the apical cell membrane. The protein resides in the cell membrane. The protein localises to the cytoplasm. It localises to the nucleus. The alpha subunit has cell adhesive properties. Can act both as an adhesion and an anti-adhesion protein. May provide a protective layer on epithelial cells against bacterial and enzyme attack. Functionally, the beta subunit contains a C-terminal domain which is involved in cell signaling, through phosphorylations and protein-protein interactions. Modulates signaling in ERK, Src and NF-kappaB pathways. In activated T-cells, influences directly or indirectly the Ras/MAPK pathway. Promotes tumor progression. Regulates P53-mediated transcription and determines cell fate in the genotoxic stress response. Binds, together with KLF4, the PE21 promoter element of P53 and represses P53 activity. This chain is Mucin-1 (MUC1), found in Mesocricetus auratus (Golden hamster).